The primary structure comprises 227 residues: Ion-translocating oxidoreductase complex subunit E (227 aa).

Transmembrane regions (helical) follow at residues A34–S56, I68–A88, F91–V111, F127–I147, and T181–I201.

This sequence belongs to the NqrDE/RnfAE family. In terms of assembly, the complex is composed of six subunits: RnfA, RnfB, RnfC, RnfD, RnfE and RnfG.

It is found in the cell inner membrane. Functionally, part of a membrane-bound complex that couples electron transfer with translocation of ions across the membrane. This Buchnera aphidicola subsp. Acyrthosiphon pisum (strain 5A) protein is Ion-translocating oxidoreductase complex subunit E.